The sequence spans 252 residues: MERLLIVNADDFGLSKGQNYGIIEACRNGIVTSTTALVNGQAIDHAVQLSRDEPSLAIGMNFVLTMGKPLTAMPGLTRDGVLGKWIWQLAEEDALPLEEITQELASQYLRFIELFGRKPTHLDSHHHVHMFPQIFPIVARFAAEEGIALRIDRQPLSNAGDLPANLRSSHGFSSAFYGEEISEALFLQVLDDSSHRGERSLEVMCHPAFVDNTIRQSAYCFPRLTELEVLTSASLKYAIAERGYRLGSYLDV.

H125 contributes to the Mg(2+) binding site.

Belongs to the YdjC deacetylase family. ChbG subfamily. Homodimer. Requires Mg(2+) as cofactor.

Its subcellular location is the cytoplasm. It catalyses the reaction N,N'-diacetylchitobiose + H2O = N-acetyl-beta-D-glucosaminyl-(1-&gt;4)-D-glucosamine + acetate. It carries out the reaction diacetylchitobiose-6'-phosphate + H2O = N'-monoacetylchitobiose-6'-phosphate + acetate. The protein operates within glycan degradation; chitin degradation. Involved in the degradation of chitin. ChbG is essential for growth on the acetylated chitooligosaccharides chitobiose and chitotriose but is dispensable for growth on cellobiose and chitosan dimer, the deacetylated form of chitobiose. Deacetylation of chitobiose-6-P and chitotriose-6-P is necessary for both the activation of the chb promoter by the regulatory protein ChbR and the hydrolysis of phosphorylated beta-glucosides by the phospho-beta-glucosidase ChbF. Catalyzes the removal of only one acetyl group from chitobiose-6-P to yield monoacetylchitobiose-6-P, the inducer of ChbR and the substrate of ChbF. This is Chitooligosaccharide deacetylase from Escherichia coli O157:H7.